The primary structure comprises 529 residues: Neuronal acetylcholine receptor subunit alpha-2 (529 aa).

The first 26 residues, 1–26, serve as a signal peptide directing secretion; it reads MGPSCPVFLSFTKLSLWWLLLTPAGG. The interval 27–56 is disordered; it reads EEAKRPPPRAPGDPLSSPSPTALPQGGSHT. Residues 27–264 are Extracellular-facing; that stretch reads EEAKRPPPRA…VTYAFVIRRL (238 aa). 2 N-linked (GlcNAc...) asparagine glycosylation sites follow: asparagine 79 and asparagine 129. Cysteines 183 and 197 form a disulfide. An N-linked (GlcNAc...) asparagine glycan is attached at asparagine 235. The cysteines at positions 247 and 248 are disulfide-linked. Transmembrane regions (helical) follow at residues 265–289, 297–315, and 331–352; these read PLFY…VFYL, ITLC…LLIT, and YLLF…VLNV. The Cytoplasmic portion of the chain corresponds to 353–502; the sequence is HHRSPSTHTM…WKYVAMVIDR (150 aa). A helical membrane pass occupies residues 503 to 521; the sequence is IFLWLFIIVCFLGTIGLFL.

It belongs to the ligand-gated ion channel (TC 1.A.9) family. Acetylcholine receptor (TC 1.A.9.1) subfamily. Alpha-2/CHRNA2 sub-subfamily. Neuronal AChR is composed of two different types of subunits: alpha and non-alpha (beta). CHRNA2/alpha-2 subunit can be combined to CHRNB2/beta-2 or CHRNB4/beta-4 to give rise to functional receptors. Both CHRNA2:CHRNB2 and CHRNA2:CHRNB4 nAChR complexes are heteropentamers with two subtypes: LS (low agonist sensitivity) with a (CHRNA2)3:(CHRNB2/4)2 and HS (high agonist sensitivity) with a (CHRNA2)2:(CHRNB2/4)3 stoichiometries; the subtypes differ in their subunit binding interfaces which are involved in ligand binding.

The protein localises to the synaptic cell membrane. Its subcellular location is the cell membrane. The enzyme catalyses Ca(2+)(in) = Ca(2+)(out). It carries out the reaction K(+)(in) = K(+)(out). It catalyses the reaction Na(+)(in) = Na(+)(out). In terms of biological role, component of neuronal acetylcholine receptors (nAChRs) that function as pentameric, ligand-gated cation channels with high calcium permeability among other activities. nAChRs are excitatory neurotrasnmitter receptors formed by a collection of nAChR subunits known to mediate synaptic transmission in the nervous system and the neuromuscular junction. Each nAchR subunit confers differential attributes to channel properties, including activation, deactivation and desensitization kinetics, pH sensitivity, cation permeability, and binding to allosteric modulators. CHRNA2 forms heteropentameric neuronal acetylcholine receptors with CHRNB2 and CHRNB4 and plays a role in nicotine dependence. This chain is Neuronal acetylcholine receptor subunit alpha-2, found in Homo sapiens (Human).